The primary structure comprises 448 residues: Putative RNA-ligase (448 aa).

The protein belongs to the asfivirus M448R family.

Its subcellular location is the virion. The chain is Putative RNA-ligase from African swine fever virus (isolate Pig/Kenya/KEN-50/1950) (ASFV).